Reading from the N-terminus, the 735-residue chain is Photosystem I P700 chlorophyll a apoprotein A2 (735 aa).

The next 8 membrane-spanning stretches (helical) occupy residues 47-70 (IFAS…FHVA), 136-159 (LYVG…LHLQ), 176-200 (LNHH…HVAI), 274-292 (MAHH…GHMY), 331-354 (LHFQ…QHMY), 370-396 (AALY…IFFI), 418-440 (ALIS…LYVH), and 518-536 (FLVH…LILV). Residues cysteine 560 and cysteine 569 each coordinate [4Fe-4S] cluster. The next 2 helical transmembrane spans lie at 576 to 597 (AFYL…YWHW) and 644 to 666 (LSVW…MFLI). Positions 655, 663, and 671 each coordinate chlorophyll a. Tryptophan 672 contacts phylloquinone. Residues 708-728 (LVGLAHFSVGYIFTYAAFLIA) traverse the membrane as a helical segment.

This sequence belongs to the PsaA/PsaB family. The PsaA/B heterodimer binds the P700 chlorophyll special pair and subsequent electron acceptors. PSI consists of a core antenna complex that captures photons, and an electron transfer chain that converts photonic excitation into a charge separation. The eukaryotic PSI reaction center is composed of at least 11 subunits. It depends on P700 is a chlorophyll a/chlorophyll a' dimer, A0 is one or more chlorophyll a, A1 is one or both phylloquinones and FX is a shared 4Fe-4S iron-sulfur center. as a cofactor.

It localises to the plastid. The protein resides in the chloroplast thylakoid membrane. It carries out the reaction reduced [plastocyanin] + hnu + oxidized [2Fe-2S]-[ferredoxin] = oxidized [plastocyanin] + reduced [2Fe-2S]-[ferredoxin]. PsaA and PsaB bind P700, the primary electron donor of photosystem I (PSI), as well as the electron acceptors A0, A1 and FX. PSI is a plastocyanin/cytochrome c6-ferredoxin oxidoreductase, converting photonic excitation into a charge separation, which transfers an electron from the donor P700 chlorophyll pair to the spectroscopically characterized acceptors A0, A1, FX, FA and FB in turn. Oxidized P700 is reduced on the lumenal side of the thylakoid membrane by plastocyanin or cytochrome c6. In terms of biological role, both potential cofactor branches in PSI seem to be active; however, electron transfer seems to proceed preferentially down the path including the phylloquinone bound by PsaA. This chain is Photosystem I P700 chlorophyll a apoprotein A2 (psaB), found in Chlamydomonas reinhardtii (Chlamydomonas smithii).